Reading from the N-terminus, the 122-residue chain is Ribonuclease P protein component (122 aa).

Belongs to the RnpA family. As to quaternary structure, consists of a catalytic RNA component (M1 or rnpB) and a protein subunit.

The enzyme catalyses Endonucleolytic cleavage of RNA, removing 5'-extranucleotides from tRNA precursor.. Its function is as follows. RNaseP catalyzes the removal of the 5'-leader sequence from pre-tRNA to produce the mature 5'-terminus. It can also cleave other RNA substrates such as 4.5S RNA. The protein component plays an auxiliary but essential role in vivo by binding to the 5'-leader sequence and broadening the substrate specificity of the ribozyme. In Shouchella clausii (strain KSM-K16) (Alkalihalobacillus clausii), this protein is Ribonuclease P protein component.